Here is a 409-residue protein sequence, read N- to C-terminus: Cdc42 effector protein 1 (409 aa).

A disordered region spans residues 1-29 (MPGPQGGTGAPTMSLGKLSPVGWVSSSHG). Residues Ser19 and Ser27 each carry the phosphoserine modification. At Thr34 the chain carries Phosphothreonine. The 15-residue stretch at 38–52 (ISPPLGDFRHTMHVG) folds into the CRIB domain. A Phosphoserine modification is found at Ser39. An Omega-N-methylarginine modification is found at Arg53. Phosphoserine occurs at positions 65, 77, 101, 113, 121, and 139. Over residues 167-189 (PRVEKHSNRDRDRDPDHSQDREQ) the composition is skewed to basic and acidic residues. The segment at 167 to 203 (PRVEKHSNRDRDRDPDHSQDREQSSFPSEPTPNPELR) is disordered. 4 positions are modified to phosphoserine: Ser191, Ser205, Ser207, and Ser210. Repeat copies occupy residues 235 to 241 (PAAETPV), 242 to 248 (PTANPPA), and 255 to 261 (PTAKPPA). The segment at 235-284 (PAAETPVPTANPPAPAANPAPTAKPPAHAITTLDAVTSLPASAVTSLPAP) is 3 X 7 AA tandem repeats of [PT]-[AT]-A-[ENT]-[PT]-[PTS]-[AG]. 2 disordered regions span residues 237–260 (AETP…AKPP) and 282–329 (PAPA…FDRH). Positions 243 to 258 (TANPPAPAANPAPTAK) are enriched in pro residues. Residues 282-291 (PAPAAASSPS) are compositionally biased toward low complexity. Phosphoserine is present on residues Ser312, Ser332, Ser368, and Ser371.

Belongs to the BORG/CEP family. As to quaternary structure, interacts with RHOQ and CDC42, in a GTP-dependent manner.

It is found in the endomembrane system. The protein localises to the cytoplasm. The protein resides in the cytoskeleton. Probably involved in the organization of the actin cytoskeleton. Induced membrane extensions in fibroblasts. The chain is Cdc42 effector protein 1 (Cdc42ep1) from Mus musculus (Mouse).